Consider the following 598-residue polypeptide: Probable translation initiation factor IF-2 (598 aa).

Residues 3–225 (LRCPIVSVLG…GLAQKFLEQK (223 aa)) form the tr-type G domain. Positions 12–19 (GHVDHGKT) are G1. A GTP-binding site is contributed by 12–19 (GHVDHGKT). Positions 37–41 (GITQH) are G2. The tract at residues 76-79 (DTPG) is G3. GTP is bound by residues 76–80 (DTPGH) and 130–133 (NKVD). Positions 130–133 (NKVD) are G4. The tract at residues 200 to 202 (SAM) is G5.

The protein belongs to the TRAFAC class translation factor GTPase superfamily. Classic translation factor GTPase family. IF-2 subfamily.

Functionally, function in general translation initiation by promoting the binding of the formylmethionine-tRNA to ribosomes. Seems to function along with eIF-2. This Methanococcus maripaludis (strain C7 / ATCC BAA-1331) protein is Probable translation initiation factor IF-2.